Reading from the N-terminus, the 166-residue chain is T-cell surface glycoprotein CD3 zeta chain (166 aa).

An N-terminal signal peptide occupies residues 1-21 (MKWTALVIVAVLQTQFPVTAA). At 22–30 (QSFGLLDPK) the chain is on the extracellular side. The helical transmembrane segment at 31 to 51 (LCYLLDGILFIYGVIVTALFL) threads the bilayer. Topologically, residues 52–166 (RAKFSRSADA…ALHMQALPPR (115 aa)) are cytoplasmic. Serine 58 is modified (phosphoserine). ITAM domains are found at residues 61 to 89 (APAYQHGQNPVYNELNVGRREEYAVLDRR), 100 to 128 (PQRKKNPHEVVYNELRKDKMAEAYSEIGM), and 133 to 161 (QRRRGKGHDGVYQGLSTATKDTYDALHMQ). Tyrosine 64, tyrosine 72, tyrosine 83, tyrosine 111, tyrosine 123, tyrosine 144, and tyrosine 155 each carry phosphotyrosine. The tract at residues 126–156 (IGMKSDNQRRRGKGHDGVYQGLSTATKDTYD) is disordered.

The protein belongs to the CD3Z/FCER1G family. The TCR-CD3 complex is composed of a CD3D/CD3E and a CD3G/CD3E heterodimers that preferentially associate with TCRalpha and TCRbeta, respectively, to form TCRalpha/CD3E/CD3G and TCRbeta/CD3G/CD3E trimers. In turn, the hexamer interacts with CD3Z homodimer to form the TCR-CD3 complex. Alternatively, TCRalpha and TCRbeta can be replaced by TCRgamma and TCRdelta. Interacts with SLA. Interacts with TRAT1. Interacts with DOCK2. Interacts with SLA2. Interacts with SHB. Interacts with ZAP70. Interacts (tyrosine phosphorylated) with SHC1 (via SH2 domain). Interacts with PTPRC. Interacts with CRK; this interaction regulates CD3Z phosphorylation. Interacts (on T cell side) with CD81, ICAM1 and CD9 at immunological synapses between antigen-presenting cells and T cells. Interacts with CD160. Interacts with LY6E. Interacts with LY6E. The signaling subunit of immunoglobulin gamma (IgG) Fc receptor complex. As a homodimer or a heterodimer with FCER1G, associates with the ligand binding subunit FCGR3A (via transmembrane domain); this interaction is a prerequisite for Fc receptor complex expression on the cell surface. Interacts with CD5. Phosphorylated on Tyr residues after T-cell receptor triggering by LCK in association with CD4/CD8.

It localises to the cell membrane. Part of the TCR-CD3 complex present on T-lymphocyte cell surface that plays an essential role in adaptive immune response. When antigen presenting cells (APCs) activate T-cell receptor (TCR), TCR-mediated signals are transmitted across the cell membrane by the CD3 chains CD3D, CD3E, CD3G and CD3Z. All CD3 chains contain immunoreceptor tyrosine-based activation motifs (ITAMs) in their cytoplasmic domain. Upon TCR engagement, these motifs become phosphorylated by Src family protein tyrosine kinases LCK and FYN, resulting in the activation of downstream signaling pathways. CD3Z ITAMs phosphorylation creates multiple docking sites for the protein kinase ZAP70 leading to ZAP70 phosphorylation and its conversion into a catalytically active enzyme. Plays an important role in intrathymic T-cell differentiation. Additionally, participates in the activity-dependent synapse formation of retinal ganglion cells (RGCs) in both the retina and dorsal lateral geniculate nucleus (dLGN). The protein is T-cell surface glycoprotein CD3 zeta chain (CD247) of Ovis aries (Sheep).